The primary structure comprises 214 residues: uncharacterized protein (214 aa).

CBS domains follow at residues 7 to 65 and 69 to 129; these read MDKN…KKPI and MRPV…EIPV.

This is an uncharacterized protein from Methanocaldococcus jannaschii (strain ATCC 43067 / DSM 2661 / JAL-1 / JCM 10045 / NBRC 100440) (Methanococcus jannaschii).